Here is an 89-residue protein sequence, read N- to C-terminus: UPF0298 protein GK1096 (89 aa).

This sequence belongs to the UPF0298 family.

The protein localises to the cytoplasm. The protein is UPF0298 protein GK1096 of Geobacillus kaustophilus (strain HTA426).